The primary structure comprises 425 residues: MTRLDSVERAVADIAAGKAVIVIDDEDRENEGDLIFAAEKATPEMVAFMVRYTSGYLCVPLDGAICDRLGLLPMYAVNQDKHGTAYTVTVDARNGVGTGISASDRATTMRLLADPTSIAEDFTRPGHVVPLRAKDGGVLRRPGHTEAAVDLARMAGLQPAGAICEIVSQKDEGSMAQTDELRVFADEHDLAMITIADLIEWRRKHEKHIERIAEARIPTRHGEFRAIGYTSIYEEVEHVALVRGEIAGPNSDGDDVLVRVHSECLTGDVFGSRRCDCGPQLDAAMAMVAREGRGIVLYMRGHEGRGIGLMHKLQAYQLQDAGEDTVDANLKLGLPADARDYGIGAQILVDLGVRSMRLLTNNPAKRVGLDGYGLHIIERVPLPVRTNAENIRYLMTKRDKMGHDLAGLDDFHESVHLPGEFGGAL.

The tract at residues 1–204 (MTRLDSVERA…IADLIEWRRK (204 aa)) is DHBP synthase. D-ribulose 5-phosphate is bound by residues 28–29 (RE), Asp-33, 141–145 (RPGHT), and Glu-165. Glu-29 provides a ligand contact to Mg(2+). His-144 serves as a coordination point for Mg(2+). The interval 205–425 (HEKHIERIAE…HLPGEFGGAL (221 aa)) is GTP cyclohydrolase II. 259–263 (RVHSE) contacts GTP. Zn(2+) contacts are provided by Cys-264, Cys-275, and Cys-277. Residues Gln-280, 303–305 (EGR), and Thr-325 contribute to the GTP site. The active-site Proton acceptor; for GTP cyclohydrolase activity is the Asp-337. The active-site Nucleophile; for GTP cyclohydrolase activity is Arg-339. GTP is bound by residues Thr-360 and Lys-365.

This sequence in the N-terminal section; belongs to the DHBP synthase family. The protein in the C-terminal section; belongs to the GTP cyclohydrolase II family. It depends on Mg(2+) as a cofactor. Mn(2+) is required as a cofactor. Requires Zn(2+) as cofactor.

The enzyme catalyses D-ribulose 5-phosphate = (2S)-2-hydroxy-3-oxobutyl phosphate + formate + H(+). The catalysed reaction is GTP + 4 H2O = 2,5-diamino-6-hydroxy-4-(5-phosphoribosylamino)-pyrimidine + formate + 2 phosphate + 3 H(+). It functions in the pathway cofactor biosynthesis; riboflavin biosynthesis; 2-hydroxy-3-oxobutyl phosphate from D-ribulose 5-phosphate: step 1/1. The protein operates within cofactor biosynthesis; riboflavin biosynthesis; 5-amino-6-(D-ribitylamino)uracil from GTP: step 1/4. In terms of biological role, catalyzes the conversion of D-ribulose 5-phosphate to formate and 3,4-dihydroxy-2-butanone 4-phosphate. Catalyzes the conversion of GTP to 2,5-diamino-6-ribosylamino-4(3H)-pyrimidinone 5'-phosphate (DARP), formate and pyrophosphate. This chain is Riboflavin biosynthesis protein RibBA, found in Mycolicibacterium paratuberculosis (strain ATCC BAA-968 / K-10) (Mycobacterium paratuberculosis).